The chain runs to 92 residues: Elongation factor 1-beta (92 aa).

The protein belongs to the EF-1-beta/EF-1-delta family.

Its function is as follows. Promotes the exchange of GDP for GTP in EF-1-alpha/GDP, thus allowing the regeneration of EF-1-alpha/GTP that could then be used to form the ternary complex EF-1-alpha/GTP/AAtRNA. The protein is Elongation factor 1-beta of Pyrobaculum calidifontis (strain DSM 21063 / JCM 11548 / VA1).